A 148-amino-acid polypeptide reads, in one-letter code: Large ribosomal subunit protein uL15 (148 aa).

The segment covering 1–30 (MPSRLRKTRKLRGHVSHGHGRIGKHRKHPG) has biased composition (basic residues). Positions 1–37 (MPSRLRKTRKLRGHVSHGHGRIGKHRKHPGGRGNAGG) are disordered. The residue at position 39 (His39) is a (3S)-3-hydroxyhistidine. Lys47 and Lys55 each carry N6-acetyllysine. At Ser68 the chain carries Phosphoserine. The residue at position 110 (Lys110) is an N6-acetyllysine.

It belongs to the universal ribosomal protein uL15 family. Component of the large ribosomal subunit. Hydroxylated on His-39 by MINA.

The protein resides in the cytoplasm. Component of the large ribosomal subunit. The ribosome is a large ribonucleoprotein complex responsible for the synthesis of proteins in the cell. The polypeptide is Large ribosomal subunit protein uL15 (Rpl27a) (Mus musculus (Mouse)).